The following is a 373-amino-acid chain: MALSKAFGQKPVKFQLEDGGDFYMIGSEVGNYLRMFRGSLYKRYPSLWRKLASVEERKKIVESSHDHGYTQLATSVTLLKASEVEEILDGNDEKYKAVSISTEPPAYLREQKAKRNSQWVPTLPNSSHHLDAVPCSTTINRSRLGRDKKRTFPLCFDDHDPAVIHENASQSEVLVPIRLDMEIEGQKLRDAFTWNMNEKLMTPEMFAEILCDDLDLNPLAFVPAIPSAIRQQIESYPTDAILEEQTDQRVIIKLNIHVGNISLVDQFEWDMSEKENSPEKFALKLCSELGQGGEFVTTIAYSIRGQLSWHQKAYAFSENPLPTVEIAIRNTGAADQWCPLLETLTDAEMEKKIRDQDRNTRRIRRLANTAPGW.

The segment at 1–101 is DNA-binding; it reads MALSKAFGQK…DEKYKAVSIS (101 aa).

It belongs to the SNF5 family. Component of the multiprotein chromatin-remodeling complexes SWI/SNF. Component of neural progenitors-specific chromatin remodeling complex (npBAF complex) and the neuron-specific chromatin remodeling complex (nBAF complex). Component of the BAF (SWI/SNF) chromatin remodeling complex. Component of the SWI/SNF-B (PBAF) chromatin remodeling complex. Binds to double-stranded DNA.

The protein localises to the nucleus. In terms of biological role, involved in chromatin-remodeling. Core component of the BAF (SWI/SNF) complex. This ATP-dependent chromatin-remodeling complex plays important roles in cell proliferation and differentiation, in cellular antiviral activities and inhibition of tumor formation. Belongs to the neural progenitors-specific chromatin remodeling complex (npBAF complex) and the neuron-specific chromatin remodeling complex (nBAF complex) and may play a role in neural development. The polypeptide is SWI/SNF-related matrix-associated actin-dependent regulator of chromatin subfamily B member 1 (smarcb1) (Dichotomyctere fluviatilis (Green pufferfish)).